A 100-amino-acid chain; its full sequence is Small ribosomal subunit protein uS14c (100 aa).

Belongs to the universal ribosomal protein uS14 family. As to quaternary structure, part of the 30S ribosomal subunit.

It is found in the plastid. Functionally, binds 16S rRNA, required for the assembly of 30S particles. In Aneura mirabilis (Parasitic liverwort), this protein is Small ribosomal subunit protein uS14c.